Reading from the N-terminus, the 484-residue chain is Muscarinic acetylcholine receptor M4 (484 aa).

The Extracellular portion of the chain corresponds to 1 to 32; the sequence is MENDTWENESSASNHSIDETIVEIPGKYQTME. 3 N-linked (GlcNAc...) asparagine glycosylation sites follow: Asn-3, Asn-8, and Asn-14. The chain crosses the membrane as a helical span at residues 33 to 55; that stretch reads MIFIATVTGSLSLVTVVGNILVM. At 56–69 the chain is on the cytoplasmic side; it reads LSIKVNRQLQTVNN. A helical transmembrane segment spans residues 70–90; the sequence is YFLFSLACADLIIGVFSMNLY. At 91 to 107 the chain is on the extracellular side; sequence SLYIIKGYWPLGPIVCD. Cysteines 106 and 186 form a disulfide. A helical transmembrane segment spans residues 108 to 129; that stretch reads LWLALDYVVSNASVMNLLIISL. The Cytoplasmic portion of the chain corresponds to 130-149; it reads ERXFCVTKPLTYPARRTTKM. The chain crosses the membrane as a helical span at residues 150–172; it reads AGLMIAAAWLLSFELWAPAILFW. Topologically, residues 173–194 are extracellular; sequence QFIVGQRTVPSGECYIQFLSNP. Residues 195–217 traverse the membrane as a helical segment; that stretch reads AVTFGTAIAAFYLPVVIMTILYI. Residues 218-406 lie on the Cytoplasmic side of the membrane; it reads HISLASRSRV…AAREKKVTRT (189 aa). Residues 255–316 form a disordered region; the sequence is NIPKQDAGDK…EKQPLSEASS (62 aa). Residues 260-270 are compositionally biased toward basic and acidic residues; that stretch reads DAGDKVVEKKN. The chain crosses the membrane as a helical span at residues 407–427; sequence IFAILLAFIITWTPYNVMVLI. Residues 428–441 lie on the Extracellular side of the membrane; the sequence is NTFCQTCIPETIWY. The helical transmembrane segment at 442–461 threads the bilayer; it reads IGYWLCYVNSTINPACYALC. The Cytoplasmic segment spans residues 462-484; it reads NATFKKTFKHLLMCQYKSIGTAR.

It belongs to the G-protein coupled receptor 1 family. Muscarinic acetylcholine receptor subfamily. CHRM4 sub-subfamily.

It is found in the cell membrane. The protein localises to the postsynaptic cell membrane. In terms of biological role, the muscarinic acetylcholine receptor mediates various cellular responses, including inhibition of adenylate cyclase, breakdown of phosphoinositides and modulation of potassium channels through the action of G proteins. Primary transducing effect is inhibition of adenylate cyclase. This is Muscarinic acetylcholine receptor M4 (chrm4) from Xenopus laevis (African clawed frog).